Reading from the N-terminus, the 700-residue chain is Pentatricopeptide repeat-containing protein At3g26540 (700 aa).

17 PPR repeats span residues 95-125 (PIFLLNRAIEAYGKCGCVDDARELFEEMPER), 126-160 (DGGSWNAVITACAQNGVSDEVFRMFRRMNRDGVRA), 161-195 (TETSFAGVLKSCGLILDLRLLRQLHCAVVKYGYSG), 196-226 (NVDLETSIVDVYGKCRVMSDARRVFDEIVNP), 227-261 (SDVSWNVIVRRYLEMGFNDEAVVMFFKMLELNVRP), 262-296 (LNHTVSSVMLACSRSLALEVGKVIHAIAVKLSVVA), 297-327 (DTVVSTSVFDMYVKCDRLESARRVFDQTRSK), 328-362 (DLKSWTSAMSGYAMSGLTREARELFDLMPERNIVS), 363-389 (WNAMLGGYVHAHEWDEALDFLTLMRQE), 394-428 (DNVTLVWILNVCSGISDVQMGKQAHGFIYRHGYDT), 429-459 (NVIVANALLDMYGKCGTLQSANIWFRQMSEL), 461-495 (DEVSWNALLTGVARVGRSEQALSFFEGMQVEAKPS), 497-529 (YTLATLLAGCANIPALNLGKAIHGFLIRDGYKI), 530-560 (DVVIRGAMVDMYSKCRCFDYAIEVFKEAATR), 561-595 (DLILWNSIIRGCCRNGRSKEVFELFMLLENEGVKP), 596-626 (DHVTFLGILQACIREGHVELGFQYFSSMSTK), and 632-662 (QVEHYDCMIELYCKYGCLHQLEEFLLLMPFD).

Belongs to the PPR family. PCMP-A subfamily.

The chain is Pentatricopeptide repeat-containing protein At3g26540 (PCMP-A5) from Arabidopsis thaliana (Mouse-ear cress).